The primary structure comprises 660 residues: Solute carrier family 5 member 4 (660 aa).

Residues 1 to 28 (MASTLSPSTVTKTPGPPEISERIQNAAD) are Cytoplasmic-facing. The chain crosses the membrane as a helical span at residues 29-47 (ISVIVIYFVVVMAVGLWAM). Residues 48-64 (LRTNRGTVGGFFLAGRD) are Extracellular-facing. A helical membrane pass occupies residues 65–85 (VTWWPMGASLFASNIGSGHFV). Residues 86-105 (GLAGTGAASGIAIAAFEWNA) are Cytoplasmic-facing. Residues 106 to 126 (LLLLLVLGWFFVPIYIKAGVM) form a helical membrane-spanning segment. Residues 127–171 (TMPEYLRKRFGGKRLQIYLSILSLFICVALRISSDIFSGAIFIKL) lie on the Extracellular side of the membrane. Residues 172 to 191 (ALGLDLYLAIFSLLAITAIY) form a helical membrane-spanning segment. At 192-208 (TITGGLASVIYTDTLQT) the chain is on the cytoplasmic side. Residues 209–229 (IIMLIGSFILMGFAFVEVGGY) form a helical membrane-spanning segment. Topologically, residues 230 to 270 (ESFTEKYMNAIPTIVEGDNLTISPKCYTPQGDSFHIFRDAV) are extracellular. Residue Asn248 is glycosylated (N-linked (GlcNAc...) asparagine). A helical transmembrane segment spans residues 271 to 291 (TGDIPWPGMIFGMTVVAAWYW). Over 292-314 (CTDQVIVQRCLSGKDMSHVKAAC) the chain is Cytoplasmic. The helical transmembrane segment at 315 to 334 (IMCGYLKLLPMFLMVMPGMI) threads the bilayer. The Extracellular portion of the chain corresponds to 335 to 423 (SRILYTEKVA…RKQASEKELL (89 aa)). A helical transmembrane segment spans residues 424 to 443 (IAGRLFIILLIVISIVWVPL). Residues 444–455 (VQVAQNGQLFHY) lie on the Cytoplasmic side of the membrane. The chain crosses the membrane as a helical span at residues 456-476 (IESISSYLGPPIAAVFLLAIF). The Extracellular segment spans residues 477 to 526 (CKRVNEQGAFWGLIIGFVMGLIRMIAEFVYGTGSCLAASNCPQIICGVHY). Residues 527 to 547 (LYFALILFFVSILVVLAISLL) traverse the membrane as a helical segment. Topologically, residues 548-638 (TKPIPDVHLY…TDTSEKPLWK (91 aa)) are cytoplasmic. The helical transmembrane segment at 639–659 (TIVNINAILLLAVAVFVHGYF) threads the bilayer.

This sequence belongs to the sodium:solute symporter (SSF) (TC 2.A.21) family. As to expression, kidney, intestine, liver, skeletal muscle and spleen.

The protein resides in the cell membrane. The enzyme catalyses D-glucose(out) + 2 Na(+)(out) = D-glucose(in) + 2 Na(+)(in). Its activity is regulated as follows. Inhibited by phlorizin. Functionally, low-affinity sodium/D-glucose symporter with a great selectivity for sugars (D-glucose &gt;&gt; D-galactose). Na(+) and D-glucose transport are tightly coupled at neutral pH, but at acidic pH, ion transport is uncoupled from sugar transport. This Sus scrofa (Pig) protein is Solute carrier family 5 member 4.